The sequence spans 307 residues: Shikimate kinase 2, chloroplastic (307 aa).

The N-terminal 60 residues, 1–60 (MEARAGLAMQSRAAVGVGAGPGVGRRGRAVIRVGKRPTAASLRVGGPAGPAAAKPLAPLY), are a transit peptide targeting the chloroplast. Residue 101–108 (GMMGSGKS) coordinates ATP. Ser-108 is a Mg(2+) binding site. The substrate site is built by Asp-126, Arg-151, and Gly-173. Arg-212 lines the ATP pocket. The tract at residues 285–307 (HSTSSGPVGDLIVDSQNRRTKAL) is disordered.

Belongs to the shikimate kinase family. Requires Mg(2+) as cofactor. In terms of tissue distribution, expressed in panicles.

It is found in the plastid. Its subcellular location is the chloroplast. The catalysed reaction is shikimate + ATP = 3-phosphoshikimate + ADP + H(+). It participates in metabolic intermediate biosynthesis; chorismate biosynthesis; chorismate from D-erythrose 4-phosphate and phosphoenolpyruvate: step 5/7. Catalyzes the specific phosphorylation of the 3-hydroxyl group of shikimic acid using ATP as a cosubstrate. This chain is Shikimate kinase 2, chloroplastic (SK2), found in Oryza sativa subsp. japonica (Rice).